We begin with the raw amino-acid sequence, 363 residues long: Pyrimidine monooxygenase RutA (363 aa).

FMN contacts are provided by residues 49–50 (IK), asparagine 115, glutamate 124, 140–141 (RY), and serine 190.

The protein belongs to the NtaA/SnaA/DszA monooxygenase family. RutA subfamily.

The catalysed reaction is uracil + FMNH2 + NADH + O2 = (Z)-3-ureidoacrylate + FMN + NAD(+) + H2O + H(+). It catalyses the reaction thymine + FMNH2 + NADH + O2 = (Z)-2-methylureidoacrylate + FMN + NAD(+) + H2O + H(+). Its function is as follows. Catalyzes the pyrimidine ring opening between N-3 and C-4 by an unusual flavin hydroperoxide-catalyzed mechanism, adding oxygen atoms in the process to yield ureidoacrylate peracid, that immediately reacts with FMN forming ureidoacrylate and FMN-N(5)-oxide. The FMN-N(5)-oxide reacts spontaneously with NADH to produce FMN. Requires the flavin reductase RutF to regenerate FMN in vivo. In Escherichia coli O127:H6 (strain E2348/69 / EPEC), this protein is Pyrimidine monooxygenase RutA.